The primary structure comprises 290 residues: MSISNYRLQTRVRLQPLVLFQIIAAYERRPKTAKMAVGTLLGRRDRCNDIIEITNSYTVQHKEQQIGDMEQFKLDTQYASEMFELNQVTYPQEKIIGWYCTGKTLSRSAAALHGYYSRECGDMQPLHLLVDTSLRGGRLTTRLYCAVTMGVPGGTRGLLFTLLPLLKVNAEGDEAVALRLMQKQALHPTKQLGRMLPELVHVMEATRELEQKLDLVMRYINDVLTRKRRPDNSIGRALHDALTSVPLLDADSFRAMFNANVRNMLMSITLSSMIKTQMELSEKLSYLPDH.

Residues 12 to 150 (VRLQPLVLFQ…TRLYCAVTMG (139 aa)) enclose the MPN domain.

Belongs to the eIF-3 subunit F family. As to quaternary structure, component of the eukaryotic translation initiation factor 3 (eIF-3) complex. The eIF-3 complex interacts with pix.

It is found in the cytoplasm. Component of the eukaryotic translation initiation factor 3 (eIF-3) complex, which is involved in protein synthesis of a specialized repertoire of mRNAs and, together with other initiation factors, stimulates binding of mRNA and methionyl-tRNAi to the 40S ribosome. The eIF-3 complex specifically targets and initiates translation of a subset of mRNAs involved in cell proliferation. The chain is Eukaryotic translation initiation factor 3 subunit F-2 from Drosophila mojavensis (Fruit fly).